A 401-amino-acid polypeptide reads, in one-letter code: Carbamoyl phosphate synthase small chain (401 aa).

Residues 1–203 are CPSase; it reads MTATPAWTIQ…EGYSTLGETD (203 aa). L-glutamine contacts are provided by serine 56, glycine 255, and glycine 257. The 189-residue stretch at 207-395 folds into the Glutamine amidotransferase type-1 domain; that stretch reads HVVALDYGVK…LNLIREKKGE (189 aa). Cysteine 284 acts as the Nucleophile in catalysis. 5 residues coordinate L-glutamine: leucine 285, glutamine 288, asparagine 326, glycine 328, and phenylalanine 329. Residues histidine 368 and glutamate 370 contribute to the active site.

The protein belongs to the CarA family. Composed of two chains; the small (or glutamine) chain promotes the hydrolysis of glutamine to ammonia, which is used by the large (or ammonia) chain to synthesize carbamoyl phosphate. Tetramer of heterodimers (alpha,beta)4.

It carries out the reaction hydrogencarbonate + L-glutamine + 2 ATP + H2O = carbamoyl phosphate + L-glutamate + 2 ADP + phosphate + 2 H(+). The enzyme catalyses L-glutamine + H2O = L-glutamate + NH4(+). Its pathway is amino-acid biosynthesis; L-arginine biosynthesis; carbamoyl phosphate from bicarbonate: step 1/1. The protein operates within pyrimidine metabolism; UMP biosynthesis via de novo pathway; (S)-dihydroorotate from bicarbonate: step 1/3. In terms of biological role, small subunit of the glutamine-dependent carbamoyl phosphate synthetase (CPSase). CPSase catalyzes the formation of carbamoyl phosphate from the ammonia moiety of glutamine, carbonate, and phosphate donated by ATP, constituting the first step of 2 biosynthetic pathways, one leading to arginine and/or urea and the other to pyrimidine nucleotides. The small subunit (glutamine amidotransferase) binds and cleaves glutamine to supply the large subunit with the substrate ammonia. The protein is Carbamoyl phosphate synthase small chain of Rhizobium meliloti (strain 1021) (Ensifer meliloti).